Consider the following 1485-residue polypeptide: Formin BNR1 (1485 aa).

Disordered regions lie at residues 65–88 (HLPP…PTLH), 226–248 (HDDS…PTET), and 549–575 (ANTS…SFDE). Positions 110–636 (NQIPPEEIVD…HVTNESRVIG (527 aa)) constitute a GBD/FH3 domain. The span at 231-248 (TSKLSIESGGSSGAPTET) shows a compositional bias: polar residues. Residues 553–564 (LEEDELTPELED) show a composition bias toward acidic residues. Residues 660–734 (ARRAVAESKM…EQLQSPNNTA (75 aa)) adopt a coiled-coil conformation. A disordered region spans residues 746–874 (GNGTVASLKD…GFMNASAPPP (129 aa)). The FH2 domain maps to 953 to 1368 (VVPSIRPKNK…YEIRKKILED (416 aa)). Coiled-coil stretches lie at residues 1240–1312 (HNIS…GELN) and 1351–1382 (QREE…ESAE). The interval 1447-1471 (LKRRMTTRKRTTDGETSPKSEQFMS) is disordered.

Belongs to the formin homology family. BNI1 subfamily. As to quaternary structure, interacts with IQG1.

The protein localises to the bud neck. It is found in the cell septum. In terms of biological role, may organize microtubules by mediating spindle positioning and movement in the budding process. Required for cytokinesis and the maintenance of polarized hyphal growth. This is Formin BNR1 (BNR1) from Candida albicans (strain SC5314 / ATCC MYA-2876) (Yeast).